The primary structure comprises 279 residues: Probable endonuclease 4 (279 aa).

Zn(2+) contacts are provided by H69, H109, E145, D179, H182, H216, D229, H231, and E261.

Belongs to the AP endonuclease 2 family. Zn(2+) is required as a cofactor.

The catalysed reaction is Endonucleolytic cleavage to 5'-phosphooligonucleotide end-products.. Functionally, endonuclease IV plays a role in DNA repair. It cleaves phosphodiester bonds at apurinic or apyrimidinic (AP) sites, generating a 3'-hydroxyl group and a 5'-terminal sugar phosphate. The polypeptide is Probable endonuclease 4 (Buchnera aphidicola subsp. Schizaphis graminum (strain Sg)).